The primary structure comprises 464 residues: Protein FAM90A5 (464 aa).

3 disordered regions span residues 16 to 42 (RAQT…DPRL), 70 to 389 (PATL…HDGA), and 415 to 437 (HSPE…SEAP). Basic and acidic residues-rich tracts occupy residues 74–89 (GKKE…KPRV) and 97–114 (NKDK…DPQR). Low complexity predominate over residues 180–197 (LASLSPLRKASLSSSSSL).

This sequence belongs to the FAM90 family.

This chain is Protein FAM90A5, found in Homo sapiens (Human).